A 194-amino-acid chain; its full sequence is Elongation factor P (194 aa).

It belongs to the elongation factor P family.

It is found in the cytoplasm. The protein operates within protein biosynthesis; polypeptide chain elongation. In terms of biological role, involved in peptide bond synthesis. Stimulates efficient translation and peptide-bond synthesis on native or reconstituted 70S ribosomes in vitro. Probably functions indirectly by altering the affinity of the ribosome for aminoacyl-tRNA, thus increasing their reactivity as acceptors for peptidyl transferase. This chain is Elongation factor P, found in Hydrogenobaculum sp. (strain Y04AAS1).